A 447-amino-acid chain; its full sequence is Na(+)-translocating NADH-quinone reductase subunit A (447 aa).

Belongs to the NqrA family. As to quaternary structure, composed of six subunits; NqrA, NqrB, NqrC, NqrD, NqrE and NqrF.

The catalysed reaction is a ubiquinone + n Na(+)(in) + NADH + H(+) = a ubiquinol + n Na(+)(out) + NAD(+). NQR complex catalyzes the reduction of ubiquinone-1 to ubiquinol by two successive reactions, coupled with the transport of Na(+) ions from the cytoplasm to the periplasm. NqrA to NqrE are probably involved in the second step, the conversion of ubisemiquinone to ubiquinol. This chain is Na(+)-translocating NADH-quinone reductase subunit A, found in Photorhabdus laumondii subsp. laumondii (strain DSM 15139 / CIP 105565 / TT01) (Photorhabdus luminescens subsp. laumondii).